Reading from the N-terminus, the 142-residue chain is uncharacterized protein (142 aa).

2 helical membrane-spanning segments follow: residues 12 to 29 (NAIL…YGLL) and 44 to 66 (IYGQ…GVTA).

The protein localises to the cell membrane. This is an uncharacterized protein from Archaeoglobus fulgidus (strain ATCC 49558 / DSM 4304 / JCM 9628 / NBRC 100126 / VC-16).